A 429-amino-acid chain; its full sequence is Adenylosuccinate synthetase (429 aa).

GTP is bound by residues 12-18 (GDEGKGK) and 40-42 (GHT). Catalysis depends on Asp13, which acts as the Proton acceptor. Mg(2+) contacts are provided by Asp13 and Gly40. Residues 13–16 (DEGK), 38–41 (NAGH), Thr129, Arg143, Gln223, Thr238, and Arg302 each bind IMP. His41 serves as the catalytic Proton donor. Residue 298 to 304 (TVTGRAR) participates in substrate binding. Residues Arg304, 330 to 332 (KLD), and 412 to 414 (STS) contribute to the GTP site.

The protein belongs to the adenylosuccinate synthetase family. In terms of assembly, homodimer. Mg(2+) serves as cofactor.

It is found in the cytoplasm. The catalysed reaction is IMP + L-aspartate + GTP = N(6)-(1,2-dicarboxyethyl)-AMP + GDP + phosphate + 2 H(+). Its pathway is purine metabolism; AMP biosynthesis via de novo pathway; AMP from IMP: step 1/2. Plays an important role in the de novo pathway of purine nucleotide biosynthesis. Catalyzes the first committed step in the biosynthesis of AMP from IMP. The polypeptide is Adenylosuccinate synthetase (Acidiphilium cryptum (strain JF-5)).